The following is a 485-amino-acid chain: Glutamyl-tRNA(Gln) amidotransferase subunit A (485 aa).

Catalysis depends on charge relay system residues lysine 79 and serine 154. Catalysis depends on serine 178, which acts as the Acyl-ester intermediate.

The protein belongs to the amidase family. GatA subfamily. Heterotrimer of A, B and C subunits.

The catalysed reaction is L-glutamyl-tRNA(Gln) + L-glutamine + ATP + H2O = L-glutaminyl-tRNA(Gln) + L-glutamate + ADP + phosphate + H(+). Its function is as follows. Allows the formation of correctly charged Gln-tRNA(Gln) through the transamidation of misacylated Glu-tRNA(Gln) in organisms which lack glutaminyl-tRNA synthetase. The reaction takes place in the presence of glutamine and ATP through an activated gamma-phospho-Glu-tRNA(Gln). This is Glutamyl-tRNA(Gln) amidotransferase subunit A from Staphylococcus aureus (strain MW2).